The primary structure comprises 92 residues: Small ribosomal subunit protein uS19c (92 aa).

The protein belongs to the universal ribosomal protein uS19 family.

It localises to the plastid. The protein resides in the chloroplast. Protein S19 forms a complex with S13 that binds strongly to the 16S ribosomal RNA. This is Small ribosomal subunit protein uS19c from Chlorokybus atmophyticus (Soil alga).